The following is a 180-amino-acid chain: Adenine phosphoribosyltransferase (180 aa).

Alanine 2 is subject to N-acetylalanine. Residues serine 4, serine 15, and serine 30 each carry the phosphoserine modification. Tyrosine 60 bears the Phosphotyrosine mark. At serine 66 the chain carries Phosphoserine. An N6-acetyllysine modification is found at lysine 114. Threonine 135 is subject to Phosphothreonine.

Belongs to the purine/pyrimidine phosphoribosyltransferase family. In terms of assembly, homodimer.

Its subcellular location is the cytoplasm. It catalyses the reaction AMP + diphosphate = 5-phospho-alpha-D-ribose 1-diphosphate + adenine. It functions in the pathway purine metabolism; AMP biosynthesis via salvage pathway; AMP from adenine: step 1/1. Functionally, catalyzes a salvage reaction resulting in the formation of AMP, that is energically less costly than de novo synthesis. The polypeptide is Adenine phosphoribosyltransferase (Cricetulus griseus (Chinese hamster)).